The sequence spans 745 residues: VCP-like ATPase (745 aa).

ATP is bound by residues 231–238 (GPPGTGKT) and 508–515 (GPPGVGKT).

This sequence belongs to the AAA ATPase family. CDC48 subfamily. As to quaternary structure, homohexamer. Forms a ring-shaped particle.

The sequence is that of VCP-like ATPase (vat) from Thermoplasma acidophilum (strain ATCC 25905 / DSM 1728 / JCM 9062 / NBRC 15155 / AMRC-C165).